Reading from the N-terminus, the 191-residue chain is MEYFDMRKMSVNLWRNAAGETREICTFPPAKRDFYWRASIASIAANGEFSLFPGMERIVTLLEGGEMLLESADRFNHTLKPLQPFAFAADQVVKAKLTAGQMSMDFNIMTRLDVCKAKVRIAERTFTTFGSCGGVVFVINGAWQLGDKLLTTDQGACWFDGRHTLRLLQPQGKLLFSEINWLAGHSPDQVQ.

Belongs to the Ves family.

This Escherichia coli (strain 55989 / EAEC) protein is Protein Ves.